We begin with the raw amino-acid sequence, 311 residues long: tRNA dimethylallyltransferase (311 aa).

Position 19 to 26 (19 to 26 (GPSGSGKS)) interacts with ATP. 21–26 (SGSGKS) contacts substrate. Residues 44–47 (DSLS) are interaction with substrate tRNA.

Belongs to the IPP transferase family. In terms of assembly, monomer. Requires Mg(2+) as cofactor.

It carries out the reaction adenosine(37) in tRNA + dimethylallyl diphosphate = N(6)-dimethylallyladenosine(37) in tRNA + diphosphate. Functionally, catalyzes the transfer of a dimethylallyl group onto the adenine at position 37 in tRNAs that read codons beginning with uridine, leading to the formation of N6-(dimethylallyl)adenosine (i(6)A). This is tRNA dimethylallyltransferase from Helicobacter pylori (strain ATCC 700392 / 26695) (Campylobacter pylori).